The sequence spans 1145 residues: MNSNRAAAGPVEENVGTQASVGPCGFVYLYPGDTFPVEEASLLGNLHAGGEVFSLPLLSGLTVEADFHVNVKAVHKKLDPATVSVKASAYHREVIVFANAACFKPIFAGPGLEGLCAASRQLFGYAEFEERAGGAARPFELADLGHLLPGAESHIAGVVVTESFKERLYRGQLVVVESQIQSVRVGECDAFKVPLYDGELFAKSPCRENLRYFYHAGVSRYLFEAHYTSLAQALRVRDVPGLIGALERQSFHDQYKLPKVYECREFPATGHRGAGDCSLTIVDSVATELAVSYGLSFLEVPQEGTALLSYDKWPIFEGCETPEQRVEALTQFNAKQAVHVHSQLFSGNSVLYLARVQKQASNRGGGGENVYNSFFMGHGLACLAEPTQKENGLPSFPGVPASALSGSNYSLHHLAYAASFSPQMLARHCYYLQFAQHQKSSNNSGYNVPTYVGTAANTPMCELCRGSCPASCVNTLFYRLRDRFPPVVASVRRDPYVVTGVAGAYNDLDIAGNFANYRDKDEESNQSEEREKFTYWQVTQTVLERLSEAGICEGGEDVGDAIHNIGSFLKVFKEIDGIVDGEVARFINSMVKNNVNYRESIKSIHHIVQYVCNVYWQPPCPVFLNLYYRCVLAVVQDICLPTCMMYEQENPAVGVSPGEWLKMHYQTLWTNFKNSCIDKGVLTGTEYKVVHKDQFCDFFDVDSAARGEFVSCKTQVRISRALMMAPRVMKIKNRIIFSNSPGTESIQNAFVRGTPKGDSCVVSGPYMRFLSTYHSQLFPGAKISPLFLWHTFSKKRQLPVFPNVPRESVTELANYVEQNSRLHGETSIIDVVPENFYTYAKVRLNNALFRACGQTQFYATTIHCLTPKIQTVPAEEYPHALGARGVADVGEYLGAARELTVPTVQCTSRDNICEVGKCRPIVTLPLVVNKYTGVTGNSQIFQCANLGYFIGRGVDKNLIPDAGSFKKQGVSTSMRKRHVFMTPLSDHLLRRSVQGAAVAFEIEGVRRRVQQILSDGDNPHVIRDVVLQLVKSLGSECRSVSEYDLEYYMGQYYIFAGDVSERLQRLSDLGGDWSEEWALSVLGEEEDPLGGELEFEKVEDAECLGHPQQDEFALAPQAAAPQYSGSSSVAGKKRKANVILGDLDL.

A required for nuclear localization region spans residues 1115-1145 (APQAAAPQYSGSSSVAGKKRKANVILGDLDL).

Belongs to the herpesviridae major DNA-binding protein family. As to quaternary structure, homooligomers. Forms double-helical filaments necessary for the formation of replication compartments within the host nucleus. Interacts with the origin-binding protein. Interacts with the helicase primase complex; this interaction stimulates primer synthesis activity of the helicase-primase complex. Interacts with the DNA polymerase. Interacts with the alkaline exonuclease; this interaction increases its nuclease processivity.

The protein localises to the host nucleus. Its function is as follows. Plays several crucial roles in viral infection. Participates in the opening of the viral DNA origin to initiate replication by interacting with the origin-binding protein. May disrupt loops, hairpins and other secondary structures present on ssDNA to reduce and eliminate pausing of viral DNA polymerase at specific sites during elongation. Promotes viral DNA recombination by performing strand-transfer, characterized by the ability to transfer a DNA strand from a linear duplex to a complementary single-stranded DNA circle. Can also catalyze the renaturation of complementary single strands. Additionally, reorganizes the host cell nucleus, leading to the formation of prereplicative sites and replication compartments. This process is driven by the protein which can form double-helical filaments in the absence of DNA. The polypeptide is Major DNA-binding protein (Equus caballus (Horse)).